The following is a 482-amino-acid chain: Glutamate--tRNA ligase (482 aa).

Positions 9–19 (PSPTGYLHIGG) match the 'HIGH' region motif. Residues 252–256 (KLSKR) carry the 'KMSKS' region motif. Lys-255 contacts ATP.

Belongs to the class-I aminoacyl-tRNA synthetase family. Glutamate--tRNA ligase type 1 subfamily. In terms of assembly, monomer.

The protein localises to the cytoplasm. The catalysed reaction is tRNA(Glu) + L-glutamate + ATP = L-glutamyl-tRNA(Glu) + AMP + diphosphate. Catalyzes the attachment of glutamate to tRNA(Glu) in a two-step reaction: glutamate is first activated by ATP to form Glu-AMP and then transferred to the acceptor end of tRNA(Glu). The chain is Glutamate--tRNA ligase from Ureaplasma parvum serovar 3 (strain ATCC 27815 / 27 / NCTC 11736).